The primary structure comprises 357 residues: Histidinol-phosphate aminotransferase 1 (357 aa).

N6-(pyridoxal phosphate)lysine is present on Lys217.

Belongs to the class-II pyridoxal-phosphate-dependent aminotransferase family. Histidinol-phosphate aminotransferase subfamily. As to quaternary structure, homodimer. Pyridoxal 5'-phosphate is required as a cofactor.

It carries out the reaction L-histidinol phosphate + 2-oxoglutarate = 3-(imidazol-4-yl)-2-oxopropyl phosphate + L-glutamate. It functions in the pathway amino-acid biosynthesis; L-histidine biosynthesis; L-histidine from 5-phospho-alpha-D-ribose 1-diphosphate: step 7/9. The sequence is that of Histidinol-phosphate aminotransferase 1 from Burkholderia lata (strain ATCC 17760 / DSM 23089 / LMG 22485 / NCIMB 9086 / R18194 / 383).